The primary structure comprises 97 residues: Small ribosomal subunit protein bS20 (97 aa).

This sequence belongs to the bacterial ribosomal protein bS20 family.

Functionally, binds directly to 16S ribosomal RNA. The protein is Small ribosomal subunit protein bS20 of Prochlorococcus marinus (strain MIT 9301).